The sequence spans 290 residues: Arylamine N-acetyltransferase 2 (290 aa).

Cys-68 (acyl-thioester intermediate) is an active-site residue. Residues Thr-103 and Gly-104 each contribute to the CoA site. 106-107 is a substrate binding site; the sequence is IH. Catalysis depends on residues His-107 and Asp-122. Positions 208, 214, and 287 each coordinate CoA.

The protein belongs to the arylamine N-acetyltransferase family.

The protein localises to the cytoplasm. It catalyses the reaction an arylamine + acetyl-CoA = an N-acetylarylamine + CoA. It carries out the reaction an N-hydroxyarylamine + acetyl-CoA = an N-acetoxyarylamine + CoA. Its function is as follows. Catalyzes the N- or O-acetylation of various arylamine and heterocyclic amine substrates, and participates in the detoxification of a plethora of hydrazine and arylamine drugs. This Macaca mulatta (Rhesus macaque) protein is Arylamine N-acetyltransferase 2 (NAT2).